Reading from the N-terminus, the 507-residue chain is Subtilisin-like protease 1 (507 aa).

The N-terminal stretch at 1–19 is a signal peptide; sequence MGVFRFISISLAAVSAANA. Positions 20 to 116 are excised as a propeptide; that stretch reads AQILSMPHAQ…VEPDTIISVN (97 aa). The Inhibitor I9 domain occupies 34 to 113; sequence SYIVMMKDDT…VMFVEPDTII (80 aa). In terms of domain architecture, Peptidase S8 spans 126 to 400; it reads SWGLARISNS…NVLISNGGAK (275 aa). Residues Asp158 and His190 each act as charge relay system in the active site. Positions 175–198 are disordered; the sequence is GSNQVNDGDDRDGSGHGTHTSGTM. Asn251 is a glycosylation site (N-linked (GlcNAc...) asparagine). Polar residues predominate over residues 282-294; the sequence is NENQDARSSSPAS. Positions 282-312 are disordered; the sequence is NENQDARSSSPASEPSVCTVGSSAEDDSRSS. The active-site Charge relay system is the Ser345. Residues 378–394 are compositionally biased toward polar residues; the sequence is SSSITDVGPGTPTNVLI. The disordered stretch occupies residues 378–486; the sequence is SSSITDVGPG…YPGGDNFDFD (109 aa). Composition is skewed to pro residues over residues 405 to 428 and 438 to 449; these read KPAPGPSPNPSQPSEPQQPAPSQP and EPFPGEPFPGEP. Residues 450-461 show a composition bias toward low complexity; it reads FPGESSPGESAP. Positions 462–476 are enriched in pro residues; sequence APAPMPPSPQHPHTP.

It belongs to the peptidase S8 family.

Its subcellular location is the secreted. In terms of biological role, secreted subtilisin-like serine protease with keratinolytic activity that contributes to pathogenicity. This Trichophyton tonsurans (Scalp ringworm fungus) protein is Subtilisin-like protease 1 (SUB1).